Reading from the N-terminus, the 258-residue chain is Beta carbonic anhydrase 3 (258 aa).

An N-terminal signal peptide occupies residues 1 to 28 (MSTESYEDAIKRLGELLSKKSDLGNVAA). A coiled-coil region spans residues 24 to 54 (GNVAAAKIKKLTDELEELDSNKLDAVERIKS). T35 carries the phosphothreonine modification. Residue S95 is modified to Phosphoserine. C201 carries the S-nitrosocysteine modification.

This sequence belongs to the beta-class carbonic anhydrase family. As to expression, strongly expressed in aerial tissues including leaves, stems, flowers and siliques, and, to a lower extent, in roots.

It localises to the cytoplasm. The protein resides in the cytosol. It carries out the reaction hydrogencarbonate + H(+) = CO2 + H2O. In terms of biological role, reversible hydration of carbon dioxide. The protein is Beta carbonic anhydrase 3 (BCA3) of Arabidopsis thaliana (Mouse-ear cress).